A 648-amino-acid chain; its full sequence is Bifunctional protein TilS/HprT (648 aa).

29 to 34 (SGGPDS) is an ATP binding site. Residue Asp627 participates in Mg(2+) binding.

The protein in the N-terminal section; belongs to the tRNA(Ile)-lysidine synthase family. This sequence in the C-terminal section; belongs to the purine/pyrimidine phosphoribosyltransferase family. Mg(2+) serves as cofactor.

It is found in the cytoplasm. The enzyme catalyses IMP + diphosphate = hypoxanthine + 5-phospho-alpha-D-ribose 1-diphosphate. The catalysed reaction is GMP + diphosphate = guanine + 5-phospho-alpha-D-ribose 1-diphosphate. It carries out the reaction cytidine(34) in tRNA(Ile2) + L-lysine + ATP = lysidine(34) in tRNA(Ile2) + AMP + diphosphate + H(+). Functionally, ligates lysine onto the cytidine present at position 34 of the AUA codon-specific tRNA(Ile) that contains the anticodon CAU, in an ATP-dependent manner. Cytidine is converted to lysidine, thus changing the amino acid specificity of the tRNA from methionine to isoleucine. This is Bifunctional protein TilS/HprT (tilS/hprT) from Listeria monocytogenes serovar 1/2a (strain ATCC BAA-679 / EGD-e).